The chain runs to 276 residues: uncharacterized protein (276 aa).

Catalysis depends on Y47, which acts as the Proton donor. H110 is a binding site for substrate.

The protein belongs to the aldo/keto reductase family.

It is found in the cytoplasm. The protein resides in the nucleus. This is an uncharacterized protein from Schizosaccharomyces pombe (strain 972 / ATCC 24843) (Fission yeast).